Here is a 137-residue protein sequence, read N- to C-terminus: Large ribosomal subunit protein uL16 (137 aa).

Basic residues predominate over residues 1-17 (MLQPKRTKFRKQMKGRN). The interval 1-22 (MLQPKRTKFRKQMKGRNRGLAQ) is disordered.

Belongs to the universal ribosomal protein uL16 family. As to quaternary structure, part of the 50S ribosomal subunit.

Its function is as follows. Binds 23S rRNA and is also seen to make contacts with the A and possibly P site tRNAs. The chain is Large ribosomal subunit protein uL16 from Teredinibacter turnerae (strain ATCC 39867 / T7901).